The sequence spans 512 residues: Threonine synthase (512 aa).

Position 121 is an N6-(pyridoxal phosphate)lysine (Lys-121). Pyridoxal 5'-phosphate contacts are provided by Gly-273, Asn-274, Phe-275, Asp-277, and Thr-445.

This sequence belongs to the threonine synthase family. Pyridoxal 5'-phosphate is required as a cofactor.

It carries out the reaction O-phospho-L-homoserine + H2O = L-threonine + phosphate. It functions in the pathway amino-acid biosynthesis; L-threonine biosynthesis; L-threonine from L-aspartate: step 5/5. Functionally, catalyzes the gamma-elimination of phosphate from L-phosphohomoserine and the beta-addition of water to produce L-threonine. The protein is Threonine synthase (THR4) of Eremothecium gossypii (strain ATCC 10895 / CBS 109.51 / FGSC 9923 / NRRL Y-1056) (Yeast).